Here is a 532-residue protein sequence, read N- to C-terminus: Glucan synthesis regulatory protein (532 aa).

A disordered region spans residues threonine 374–isoleucine 532. Low complexity predominate over residues methionine 381–serine 393. Polar residues predominate over residues proline 447–serine 457. The span at serine 475–glycine 516 shows a compositional bias: basic and acidic residues.

It belongs to the KNR4/SMI1 family.

Involved in the regulation of 1,3-beta-glucan synthase activity and cell-wall formation. The sequence is that of Glucan synthesis regulatory protein (cot-2) from Neurospora crassa (strain ATCC 24698 / 74-OR23-1A / CBS 708.71 / DSM 1257 / FGSC 987).